The chain runs to 889 residues: Alanine--tRNA ligase (889 aa).

Residues H569, H573, C671, and H675 each contribute to the Zn(2+) site.

It belongs to the class-II aminoacyl-tRNA synthetase family. Zn(2+) is required as a cofactor.

Its subcellular location is the cytoplasm. The enzyme catalyses tRNA(Ala) + L-alanine + ATP = L-alanyl-tRNA(Ala) + AMP + diphosphate. In terms of biological role, catalyzes the attachment of alanine to tRNA(Ala) in a two-step reaction: alanine is first activated by ATP to form Ala-AMP and then transferred to the acceptor end of tRNA(Ala). Also edits incorrectly charged Ser-tRNA(Ala) and Gly-tRNA(Ala) via its editing domain. In Synechococcus sp. (strain CC9605), this protein is Alanine--tRNA ligase.